Reading from the N-terminus, the 392-residue chain is Glutamate 5-kinase (392 aa).

Residue Lys-17 coordinates ATP. Residues Ser-57, Asp-144, and Asn-156 each contribute to the substrate site. Ser-176–Asp-177 contributes to the ATP binding site. The PUA domain occupies Ala-282 to Ala-359. A disordered region spans residues Thr-373–Ala-392.

This sequence belongs to the glutamate 5-kinase family.

It localises to the cytoplasm. It catalyses the reaction L-glutamate + ATP = L-glutamyl 5-phosphate + ADP. It functions in the pathway amino-acid biosynthesis; L-proline biosynthesis; L-glutamate 5-semialdehyde from L-glutamate: step 1/2. Catalyzes the transfer of a phosphate group to glutamate to form L-glutamate 5-phosphate. The chain is Glutamate 5-kinase from Allorhizobium ampelinum (strain ATCC BAA-846 / DSM 112012 / S4) (Agrobacterium vitis (strain S4)).